A 1434-amino-acid polypeptide reads, in one-letter code: Nitric oxide synthase 1 (1434 aa).

The tract at residues Met-1 to Leu-205 is interaction with NOSIP. One can recognise a PDZ domain in the interval Ser-17 to Gly-99. Disordered stretches follow at residues Thr-112–Thr-192 and Asn-276–Cys-302. The interaction with DYNLL1/PIN stretch occupies residues Tyr-163–Asp-245. Polar residues predominate over residues Pro-285–Pro-299. Ser-339 serves as a coordination point for (6R)-L-erythro-5,6,7,8-tetrahydrobiopterin. Position 420 (Cys-420) interacts with heme b. The L-arginine site is built by Gln-483, Trp-592, Tyr-593, and Glu-597. 3 residues coordinate (6R)-L-erythro-5,6,7,8-tetrahydrobiopterin: Val-682, Trp-683, and Phe-696. A heme b-binding site is contributed by Tyr-711. The calmodulin-binding stretch occupies residues Lys-730–Met-750. A Flavodoxin-like domain is found at Ala-760–Phe-940. The FMN site is built by Thr-766, Glu-767, Thr-768, Lys-770, Ser-771, Ser-812, Thr-813, and Gly-817. A phosphoserine mark is found at Ser-852, Ser-862, and Ser-863. Residues Ser-891, His-896, Cys-898, Glu-924, and Gln-928 each contribute to the FMN site. One can recognise an FAD-binding FR-type domain in the interval Lys-995–Pro-1242. Residue Arg-1015 coordinates NADP(+). The FAD site is built by His-1037, Arg-1178, Tyr-1179, Tyr-1180, Ser-1181, Thr-1196, and Ala-1198. Ser-1201 serves as a coordination point for NADP(+). FAD is bound by residues Tyr-1202, Val-1215, Cys-1216, and Ser-1217. Positions 1256, 1289, 1318, 1319, 1325, 1327, 1329, 1362, 1403, and 1405 each coordinate NADP(+).

It belongs to the NOS family. As to quaternary structure, homodimer. Interacts with DLG4; the interaction possibly being prevented by the association between NOS1 and CAPON. Forms a ternary complex with CAPON and RASD1. Forms a ternary complex with CAPON and SYN1. Interacts with ZDHHC23. Interacts with NOSIP; which may impair its synaptic location. Interacts with HTR4. Interacts with SLC6A4. Interacts with VAC14. Interacts (via N-terminal domain) with DLG4 (via N-terminal tandem pair of PDZ domains). Interacts with SLC6A4. Forms a complex with ASL, ASS1 and SLC7A1; the complex regulates cell-autonomous L-arginine synthesis and citrulline recycling while channeling extracellular L-arginine to nitric oxide synthesis pathway. Interacts with DMD; localizes NOS1 to sarcolemma in muscle cells. Interacts with DYNLL1; inhibits the nitric oxide synthase activity. Heme b serves as cofactor. It depends on FAD as a cofactor. FMN is required as a cofactor. The cofactor is (6R)-L-erythro-5,6,7,8-tetrahydrobiopterin. In terms of processing, ubiquitinated; mediated by STUB1/CHIP in the presence of Hsp70 and Hsp40 (in vitro). In terms of tissue distribution, isoform 1 is ubiquitously expressed: detected in skeletal muscle and brain, also in testis, lung and kidney, and at low levels in heart, adrenal gland and retina. Not detected in the platelets. Isoform 3 is expressed only in testis. Isoform 4 is detected in testis, skeletal muscle, lung, and kidney, at low levels in the brain, but not in the heart and adrenal gland.

The protein resides in the cell membrane. It localises to the sarcolemma. The protein localises to the cell projection. It is found in the dendritic spine. It catalyses the reaction 2 L-arginine + 3 NADPH + 4 O2 + H(+) = 2 L-citrulline + 2 nitric oxide + 3 NADP(+) + 4 H2O. With respect to regulation, stimulated by calcium/calmodulin. Inhibited by DYNLL1 that prevents the dimerization of the protein. Inhibited by NOSIP. Produces nitric oxide (NO) which is a messenger molecule with diverse functions throughout the body. In the brain and peripheral nervous system, NO displays many properties of a neurotransmitter. Probably has nitrosylase activity and mediates cysteine S-nitrosylation of cytoplasmic target proteins such SRR. The chain is Nitric oxide synthase 1 from Homo sapiens (Human).